Reading from the N-terminus, the 359-residue chain is 2-amino-3-carboxymuconate-6-semialdehyde decarboxylase (359 aa).

Residues 1-13 show a composition bias toward low complexity; that stretch reads MENKETTTTTTTT. A disordered region spans residues 1-21; it reads MENKETTTTTTTTNNGSDKKK. Zn(2+) is bound by residues H29 and H31. R70 contributes to the substrate binding site. The Zn(2+) site is built by H197 and D314.

It belongs to the metallo-dependent hydrolases superfamily. ACMSD family. As to quaternary structure, monomer.

It catalyses the reaction 2-amino-3-carboxymuconate 6-semialdehyde + H(+) = 2-aminomuconate 6-semialdehyde + CO2. The protein operates within secondary metabolite metabolism; quinolate metabolism. Functionally, converts alpha-amino-beta-carboxymuconate-epsilon-semialdehyde (ACMS) to alpha-aminomuconate semialdehyde (AMS). The sequence is that of 2-amino-3-carboxymuconate-6-semialdehyde decarboxylase (acmsd) from Dictyostelium discoideum (Social amoeba).